An 86-amino-acid chain; its full sequence is Small ribosomal subunit protein uS15 (86 aa).

It belongs to the universal ribosomal protein uS15 family. Part of the 30S ribosomal subunit. Forms a bridge to the 50S subunit in the 70S ribosome, contacting the 23S rRNA.

One of the primary rRNA binding proteins, it binds directly to 16S rRNA where it helps nucleate assembly of the platform of the 30S subunit by binding and bridging several RNA helices of the 16S rRNA. Functionally, forms an intersubunit bridge (bridge B4) with the 23S rRNA of the 50S subunit in the ribosome. This chain is Small ribosomal subunit protein uS15, found in Neorickettsia sennetsu (strain ATCC VR-367 / Miyayama) (Ehrlichia sennetsu).